Here is an 86-residue protein sequence, read N- to C-terminus: UPF0437 protein Ava_4254 (86 aa).

Belongs to the UPF0437 family.

This chain is UPF0437 protein Ava_4254, found in Trichormus variabilis (strain ATCC 29413 / PCC 7937) (Anabaena variabilis).